The chain runs to 140 residues: Small ribosomal subunit protein uS19 (140 aa).

The protein belongs to the universal ribosomal protein uS19 family.

Its function is as follows. Protein S19 forms a complex with S13 that binds strongly to the 16S ribosomal RNA. The sequence is that of Small ribosomal subunit protein uS19 from Methanocella arvoryzae (strain DSM 22066 / NBRC 105507 / MRE50).